A 91-amino-acid polypeptide reads, in one-letter code: DNA-directed RNA polymerase subunit omega (91 aa).

It belongs to the RNA polymerase subunit omega family. As to quaternary structure, the RNAP catalytic core consists of 2 alpha, 1 beta, 1 beta' and 1 omega subunit. When a sigma factor is associated with the core the holoenzyme is formed, which can initiate transcription.

It catalyses the reaction RNA(n) + a ribonucleoside 5'-triphosphate = RNA(n+1) + diphosphate. In terms of biological role, promotes RNA polymerase assembly. Latches the N- and C-terminal regions of the beta' subunit thereby facilitating its interaction with the beta and alpha subunits. The chain is DNA-directed RNA polymerase subunit omega from Shigella flexneri.